The chain runs to 262 residues: Type III pantothenate kinase (262 aa).

6-13 contributes to the ATP binding site; the sequence is DAGNTNMV. Residues Tyr100 and 107–110 contribute to the substrate site; that span reads GADR. The active-site Proton acceptor is Asp109. Position 129 (Asp129) interacts with K(+). Residue Thr132 coordinates ATP. A substrate-binding site is contributed by Thr184.

It belongs to the type III pantothenate kinase family. In terms of assembly, homodimer. NH4(+) is required as a cofactor. The cofactor is K(+).

The protein localises to the cytoplasm. The catalysed reaction is (R)-pantothenate + ATP = (R)-4'-phosphopantothenate + ADP + H(+). Its pathway is cofactor biosynthesis; coenzyme A biosynthesis; CoA from (R)-pantothenate: step 1/5. Its function is as follows. Catalyzes the phosphorylation of pantothenate (Pan), the first step in CoA biosynthesis. The sequence is that of Type III pantothenate kinase from Clostridium tetani (strain Massachusetts / E88).